The sequence spans 335 residues: DDRGK domain-containing protein 1 (335 aa).

At 1–6 (MGDTYS) the chain is on the lumenal side. Residues 7–27 (LVLVAGYLSIFLFIGAIGYFY) form a helical membrane-spanning segment. Over 28–335 (LSKPRIPSSN…NNDQDPVDTN (308 aa)) the chain is Cytoplasmic. Residues 37 to 124 (NVNEQQQQQQ…GEDIGVVAPG (88 aa)) are disordered. Low complexity-rich tracts occupy residues 41–56 (QQQQQQQQQQQQQQPQ) and 91–103 (SSGSDSDNSTNSD). Over residues 104-117 (NYDDDNGQEGEGED) the composition is skewed to acidic residues.

It belongs to the DDRGK1 family.

The protein resides in the endoplasmic reticulum membrane. Its function is as follows. Substrate adapter for ufmylation, the covalent attachment of the ubiquitin-like modifier UFM1 to substrate proteins. The protein is DDRGK domain-containing protein 1 of Dictyostelium discoideum (Social amoeba).